We begin with the raw amino-acid sequence, 185 residues long: Ribosome-recycling factor (185 aa).

This sequence belongs to the RRF family.

It localises to the cytoplasm. Functionally, responsible for the release of ribosomes from messenger RNA at the termination of protein biosynthesis. May increase the efficiency of translation by recycling ribosomes from one round of translation to another. This Streptococcus thermophilus (strain ATCC BAA-491 / LMD-9) protein is Ribosome-recycling factor.